Here is an 894-residue protein sequence, read N- to C-terminus: Microsomal triglyceride transfer protein large subunit (894 aa).

The N-terminal stretch at 1-18 (MILLAVLFLCFISSYSAS) is a signal peptide. In terms of domain architecture, Vitellogenin spans 28–659 (LNNDRLYKLT…IFQYIGKAGL (632 aa)). Cysteine 174 and cysteine 194 are disulfide-bonded.

Heterodimer; heterodimerizes with the protein disulfide isomerase (P4HB/PDI). Interacts with APOB. Interacts with PRAP1. Liver and small intestine. Also found in ovary, testis and kidney.

Its subcellular location is the endoplasmic reticulum. It is found in the golgi apparatus. It carries out the reaction a 1,2-diacyl-sn-glycero-3-phosphocholine(in) = a 1,2-diacyl-sn-glycero-3-phosphocholine(out). The enzyme catalyses a 1,2-diacyl-sn-glycero-3-phosphoethanolamine(in) = a 1,2-diacyl-sn-glycero-3-phosphoethanolamine(out). It catalyses the reaction a cholesterol ester(in) = a cholesterol ester(out). The catalysed reaction is a triacyl-sn-glycerol(in) = a triacyl-sn-glycerol(out). Catalyzes the transport of triglyceride, cholesteryl ester, and phospholipid between phospholipid surfaces. Required for the assembly and secretion of plasma lipoproteins that contain apolipoprotein B. May be involved in regulating cholesteryl ester biosynthesis in cells that produce lipoproteins. The sequence is that of Microsomal triglyceride transfer protein large subunit (MTTP) from Homo sapiens (Human).